A 418-amino-acid chain; its full sequence is S-adenosylmethionine synthase (418 aa).

Residue histidine 16 coordinates ATP. Mg(2+) is bound at residue aspartate 18. Glutamate 44 contacts K(+). Glutamate 57 and glutamine 100 together coordinate L-methionine. Positions 100–110 are flexible loop; that stretch reads QSPDISQGVTK. ATP-binding positions include 175 to 177, 251 to 252, aspartate 260, 266 to 267, alanine 283, and lysine 287; these read DGK, KF, and RK. Aspartate 260 contributes to the L-methionine binding site. Lysine 291 serves as a coordination point for L-methionine.

It belongs to the AdoMet synthase family. In terms of assembly, homotetramer; dimer of dimers. It depends on Mg(2+) as a cofactor. K(+) is required as a cofactor.

The protein resides in the cytoplasm. It catalyses the reaction L-methionine + ATP + H2O = S-adenosyl-L-methionine + phosphate + diphosphate. It functions in the pathway amino-acid biosynthesis; S-adenosyl-L-methionine biosynthesis; S-adenosyl-L-methionine from L-methionine: step 1/1. Functionally, catalyzes the formation of S-adenosylmethionine (AdoMet) from methionine and ATP. The overall synthetic reaction is composed of two sequential steps, AdoMet formation and the subsequent tripolyphosphate hydrolysis which occurs prior to release of AdoMet from the enzyme. This is S-adenosylmethionine synthase from Gloeothece citriformis (strain PCC 7424) (Cyanothece sp. (strain PCC 7424)).